A 154-amino-acid chain; its full sequence is 3-hydroxyacyl-[acyl-carrier-protein] dehydratase FabZ (154 aa).

The active site involves His-60.

This sequence belongs to the thioester dehydratase family. FabZ subfamily.

The protein resides in the cytoplasm. It carries out the reaction a (3R)-hydroxyacyl-[ACP] = a (2E)-enoyl-[ACP] + H2O. In terms of biological role, involved in unsaturated fatty acids biosynthesis. Catalyzes the dehydration of short chain beta-hydroxyacyl-ACPs and long chain saturated and unsaturated beta-hydroxyacyl-ACPs. The chain is 3-hydroxyacyl-[acyl-carrier-protein] dehydratase FabZ from Actinobacillus pleuropneumoniae serotype 5b (strain L20).